Here is a 147-residue protein sequence, read N- to C-terminus: Large ribosomal subunit protein uL15 (147 aa).

The disordered stretch occupies residues 1-46; it reads MSIRLENLSYTPGARKEKHRKGRGHAAGKGKQAGRGQSGQKKRSTV. Residues 16-28 show a composition bias toward basic residues; it reads KEKHRKGRGHAAG.

It belongs to the universal ribosomal protein uL15 family. As to quaternary structure, part of the 50S ribosomal subunit.

Its function is as follows. Binds to the 23S rRNA. The sequence is that of Large ribosomal subunit protein uL15 from Mesomycoplasma hyopneumoniae (strain 7448) (Mycoplasma hyopneumoniae).